The primary structure comprises 2637 residues: Nonribisomal peptide synthetase valB (2637 aa).

Positions 1-376 are condensation 1; it reads MADGADYTQR…KALIRSPPST (376 aa). Residues 413-803 form an adenylation 1 region; that stretch reads SQASRRPDAA…VGRRDNQIKL (391 aa). The region spanning 946–1022 is the Carrier 1 domain; that stretch reads PPANPPERAL…EAASEIKEPT (77 aa). The residue at position 983 (serine 983) is an O-(pantetheine 4'-phosphoryl)serine. A disordered region spans residues 1016–1045; it reads SEIKEPTDASAPSPSPISRDLPLQKSNHDR. Residues 1063–1506 are condensation 2; sequence VEAIYPCTAL…LSRADMSLLQ (444 aa). Residues 1524-1933 form an adenylation 2 region; that stretch reads AREVAHQRPL…EGRKDTRVKL (410 aa). Residues 2078-2154 enclose the Carrier 2 domain; that stretch reads KEVTDDQAFM…YMVSKTSVSN (77 aa). An O-(pantetheine 4'-phosphoryl)serine modification is found at serine 2115. The tract at residues 2193-2582 is condensation 3; sequence ESVAPATDAQ…LWMGAYLDAA (390 aa).

Belongs to the NRP synthetase family.

Its pathway is secondary metabolite biosynthesis. Its function is as follows. Nonribisomal peptide synthetase; part of the gene cluster that mediates the biosynthesis of valactamides. The first step of the pathway is performed by the highly reducing polyketide synthase valA that produces the polyketide part of the final products. An acetyl starter unit is incorporated by the ketosynthase domain of valA, and subsequently 6 malonyl-CoA-derived ketide units are incorporated and fully reduced to their respective alkane forms by the action of the ketoreductase, dehydratase, and enoylreductase domains (except for the penultimate unit, which is reduced only to the alkene). The final five ketide units are each proposed to be alpha-methylated by the methyltransferase domain before ketone reduction by the ketoreductase domain. The C1 domain of the nonribisomal peptide synthetase valB then catalyzes amide bond formation between the heptaketide chain and L-valine (L-Val) attached to the T1 domain. The C2 domain incorporating L-isoleucine (L-Ile) then carries out chain elongation, which is followed by macrolactonization by the Ct domain to release the final product. In Aspergillus terreus, this protein is Nonribisomal peptide synthetase valB.